The primary structure comprises 399 residues: Formate-dependent phosphoribosylglycinamide formyltransferase (399 aa).

N(1)-(5-phospho-beta-D-ribosyl)glycinamide contacts are provided by residues 21 to 22 (EL) and E81. Residues R114, K156, 161 to 166 (SSGKGQ), 196 to 199 (EGFI), and E204 contribute to the ATP site. Residues 119 to 314 (RLAAEELGLP…EFELHARAIL (196 aa)) form the ATP-grasp domain. The Mg(2+) site is built by E273 and E285. N(1)-(5-phospho-beta-D-ribosyl)glycinamide contacts are provided by residues D292, K361, and 368 to 369 (RR). The segment at 370 to 399 (MGVAVANGESTDQARERAKLAASKVRPTRT) is disordered.

Belongs to the PurK/PurT family. As to quaternary structure, homodimer.

The catalysed reaction is N(1)-(5-phospho-beta-D-ribosyl)glycinamide + formate + ATP = N(2)-formyl-N(1)-(5-phospho-beta-D-ribosyl)glycinamide + ADP + phosphate + H(+). The protein operates within purine metabolism; IMP biosynthesis via de novo pathway; N(2)-formyl-N(1)-(5-phospho-D-ribosyl)glycinamide from N(1)-(5-phospho-D-ribosyl)glycinamide (formate route): step 1/1. Involved in the de novo purine biosynthesis. Catalyzes the transfer of formate to 5-phospho-ribosyl-glycinamide (GAR), producing 5-phospho-ribosyl-N-formylglycinamide (FGAR). Formate is provided by PurU via hydrolysis of 10-formyl-tetrahydrofolate. The chain is Formate-dependent phosphoribosylglycinamide formyltransferase from Dechloromonas aromatica (strain RCB).